Consider the following 821-residue polypeptide: MDTASPEEIDALKRHYLKKELFSLLIADELNFVSEPTNLDHLGSPFVEKGKSVIPYEKSQIPVLRFIFKRFILTFPFLDPDSQNQLWNVNFRNLLKSLSKSNVSVLPDDSDATHLHKWLLKFQNMLTLLMSRAFHSIQDEKNINIELLDTPKLEKDLHKSELQQKPNILEAYVLGVRQSTQAKMLRTKRVYEYLIKVSYEENTFFIARKYSDFSHFHHLLLKSYPNAYVPRLPPKDDHDTYLNSSEDSTLSPLPSRSSDTNDPQSDSQHVLRQERMRIELRQYIKNILNDDELHLTEEVLSFLTDDPVTLTASELTDINFRQELDVIRQLEQQKFVEIASQRAKELDVYMEEFKRSLTENNGFTTLFTELKEKNSISELSPSLQKTIEWARVNLASTIYDTFIGKEKSLETYLQIKKMHQLFPYTVIKNIMRFSNPLSVMKRILDTLLAQPFGMKSLFQRLLSISLNENVRAIHKLISRYEARIVSPEILTKIQEQVENPCKAAREVLEKKQMKRHDYLYFILISDDVPPKLPDNLIRRVYAERTAWKAALDSEDYPTDPTVIRRSKRYGYMMKLMHLYAKQFNKRRSISLISEGATGEIMKSMVDSPELNPNILVEQFIDLVRRHEDSFYDFVHRVYLHDSGLFASLMEWIENIIGFLRQGTSAPIDMDLVVDALDEESRQALDVELNKLLKWNQRKKSALFLRKTTKYIPGEETSLPVTMDELGIDEEIMAELRGDEDDQDENDQVTKVEEEHMEDDDSVEEFDPIIEERQRMKRKANRPANIIPPKPKLRTVKTLLPAFKEQVYPILHKFVSENEKDI.

Residues 171–310 (AYVLGVRQST…SFLTDDPVTL (140 aa)) enclose the PX domain. Residues 235–271 (KDDHDTYLNSSEDSTLSPLPSRSSDTNDPQSDSQHVL) form a disordered region. The span at 241-268 (YLNSSEDSTLSPLPSRSSDTNDPQSDSQ) shows a compositional bias: polar residues. Residues Thr260 and Thr597 each carry the phosphothreonine modification. 2 stretches are compositionally biased toward acidic residues: residues 737–746 (GDEDDQDEND) and 754–766 (EHMEDDDSVEEFD). Residues 737 to 766 (GDEDDQDENDQVTKVEEEHMEDDDSVEEFD) form a disordered region. At Ser761 the chain carries Phosphoserine.

It is found in the mitochondrion membrane. The sequence is that of PX domain-containing protein C1450.12 from Schizosaccharomyces pombe (strain 972 / ATCC 24843) (Fission yeast).